A 190-amino-acid polypeptide reads, in one-letter code: Holliday junction branch migration complex subunit RuvA (190 aa).

The segment at 1-64 is domain I; it reads MIGSLTGIIE…DNLTQLYGFL (64 aa). Residues 65–142 form a domain II region; it reads DKQEQDYMRM…KMPIEETLII (78 aa). A region of interest (flexible linker) is located at residue K143. The domain III stretch occupies residues 143 to 190; that stretch reads KEDDSLAALISLGYDKLKAFNAIQEIKANFPDDSIQEIIRKALQKLSQ.

The protein belongs to the RuvA family. Homotetramer. Forms an RuvA(8)-RuvB(12)-Holliday junction (HJ) complex. HJ DNA is sandwiched between 2 RuvA tetramers; dsDNA enters through RuvA and exits via RuvB. An RuvB hexamer assembles on each DNA strand where it exits the tetramer. Each RuvB hexamer is contacted by two RuvA subunits (via domain III) on 2 adjacent RuvB subunits; this complex drives branch migration. In the full resolvosome a probable DNA-RuvA(4)-RuvB(12)-RuvC(2) complex forms which resolves the HJ.

The protein resides in the cytoplasm. Its function is as follows. The RuvA-RuvB-RuvC complex processes Holliday junction (HJ) DNA during genetic recombination and DNA repair, while the RuvA-RuvB complex plays an important role in the rescue of blocked DNA replication forks via replication fork reversal (RFR). RuvA specifically binds to HJ cruciform DNA, conferring on it an open structure. The RuvB hexamer acts as an ATP-dependent pump, pulling dsDNA into and through the RuvAB complex. HJ branch migration allows RuvC to scan DNA until it finds its consensus sequence, where it cleaves and resolves the cruciform DNA. This chain is Holliday junction branch migration complex subunit RuvA, found in Ehrlichia chaffeensis (strain ATCC CRL-10679 / Arkansas).